The sequence spans 720 residues: Polyribonucleotide nucleotidyltransferase (720 aa).

Mg(2+) is bound by residues D487 and D493. The KH domain occupies 554–613 (PRIETFKIPTDKIREVIGTGGKVIREIVEKTGAKINIEDDGTVKVASNDGEAMKAAIKWI). The region spanning 623–691 (GQIYEGTVVK…DRGKTRLSMK (69 aa)) is the S1 motif domain. The tract at residues 691–720 (KAVDQQTGEDLEAAGHKAEKADAPREAAGE) is disordered. Residues 703–720 (AAGHKAEKADAPREAAGE) show a composition bias toward basic and acidic residues.

It belongs to the polyribonucleotide nucleotidyltransferase family. Mg(2+) serves as cofactor.

It is found in the cytoplasm. It catalyses the reaction RNA(n+1) + phosphate = RNA(n) + a ribonucleoside 5'-diphosphate. Its function is as follows. Involved in mRNA degradation. Catalyzes the phosphorolysis of single-stranded polyribonucleotides processively in the 3'- to 5'-direction. The polypeptide is Polyribonucleotide nucleotidyltransferase (Nitrobacter hamburgensis (strain DSM 10229 / NCIMB 13809 / X14)).